The sequence spans 256 residues: Ribonuclease HII (256 aa).

One can recognise an RNase H type-2 domain in the interval 73-256; it reads KLIAGIDEAG…RVSFTKNFIV (184 aa). A divalent metal cation contacts are provided by Asp79, Glu80, and Asp171.

This sequence belongs to the RNase HII family. Mn(2+) serves as cofactor. Mg(2+) is required as a cofactor.

Its subcellular location is the cytoplasm. It carries out the reaction Endonucleolytic cleavage to 5'-phosphomonoester.. Functionally, endonuclease that specifically degrades the RNA of RNA-DNA hybrids. This Acetivibrio thermocellus (strain ATCC 27405 / DSM 1237 / JCM 9322 / NBRC 103400 / NCIMB 10682 / NRRL B-4536 / VPI 7372) (Clostridium thermocellum) protein is Ribonuclease HII.